Here is a 484-residue protein sequence, read N- to C-terminus: Protein DETOXIFICATION 33 (484 aa).

Over residues 1–16 (MGKDKTLPLLDPREPP) the composition is skewed to basic and acidic residues. Residues 1-22 (MGKDKTLPLLDPREPPELTGTK) are disordered. The next 12 membrane-spanning stretches (helical) occupy residues 39–59 (LWEL…LGAL), 81–101 (VISG…ETLC), 122–142 (VILF…PPIL), 155–175 (AGKF…NFPI), 190–210 (WISG…ILYF), 218–238 (AITL…YILI), 267–287 (ALML…TGLL), 294–314 (VDAI…SIGF), 338–358 (VIVV…VVLA), 380–400 (IAVL…LSGV), 409–429 (LVAY…GLVL), and 439–459 (GIWG…IGII).

This sequence belongs to the multi antimicrobial extrusion (MATE) (TC 2.A.66.1) family.

It localises to the membrane. The chain is Protein DETOXIFICATION 33 from Arabidopsis thaliana (Mouse-ear cress).